Consider the following 623-residue polypeptide: MSSRSGSADTFTQRSDSNLRPRRLISLDDVRDNNGRQPSSSGISTTGSSELPTLRSRGATPSPRPSRNVSPIPMGHPSRATQPRSDARPGNSLGGFTPNGKYQDPFTESSRAAVDFLDASWSSLQGIASSLLGSDTARPTSNGGPRSHARKPSRPDYLAKHRAVSTSTWGPSGPTTPEIGAGTQDERQAMVHAKKMEALLLADTDPSWNLNSRHKRRDSNDRTVQSRADTDQDEEALVYVHQVQPTDTITGVTIRYGCQAAIFRKVNGFWPSDSIQARKTVLLPVDCCSIKGRPVKAREETDLLQDVPSRPSIEDPSGSSIVPAPSPEKSTFSRISEQPGTEPEAESDQIWKHESWVQIDGFAEPVEIGRVPRRALGFFPRTRRKSVSYSDSEPVRGRLQTPTISTASSPIQPSSSPNADQHDSYHAGSPASRGPGSKPKGRHRRRPSGLELSGTGVGTLDRNVNLPGPAMDGLSKFFAQHLPTLAPKQAPPNFDSLSGNSSTVASINSTSLDSIGGAVEGWVRKITARAKSSINDLQQGTSSSQNQAMPPETRRRGFSDLIELEDGVESRNSSGLLAGTGWKPDLTRSGSGYVNGANLRERFPSASPSTSRTRTGLDRTKGD.

Residues 1 to 18 (MSSRSGSADTFTQRSDSN) are compositionally biased toward polar residues. 7 disordered regions span residues 1 to 107 (MSSR…DPFT), 132 to 181 (LGSD…EIGA), 207 to 231 (SWNLNSRHKRRDSNDRTVQSRADTD), 298 to 349 (REET…ESDQ), 384 to 464 (RKSV…DRNV), 533 to 553 (SINDLQQGTSSSQNQAMPPET), and 568 to 623 (VESR…TKGD). The span at 25–34 (ISLDDVRDNN) shows a compositional bias: basic and acidic residues. Residues 39–49 (SSSGISTTGSS) show a composition bias toward low complexity. The span at 132 to 144 (LGSDTARPTSNGG) shows a compositional bias: polar residues. The span at 165-177 (STSTWGPSGPTTP) shows a compositional bias: low complexity. The segment covering 328–339 (EKSTFSRISEQP) has biased composition (polar residues). Residues 400 to 417 (QTPTISTASSPIQPSSSP) are compositionally biased toward low complexity. Positions 533 to 548 (SINDLQQGTSSSQNQA) are enriched in polar residues. Over residues 604-614 (PSASPSTSRTR) the composition is skewed to low complexity.

This is an uncharacterized protein from Emericella nidulans (strain FGSC A4 / ATCC 38163 / CBS 112.46 / NRRL 194 / M139) (Aspergillus nidulans).